Consider the following 534-residue polypeptide: Coiled-coil domain-containing protein 183 (534 aa).

Coiled-coil stretches lie at residues Glu10–Arg54, Asp136–Val209, and Arg321–Ile406.

The polypeptide is Coiled-coil domain-containing protein 183 (Ccdc183) (Mus musculus (Mouse)).